The following is a 350-amino-acid chain: 3-isopropylmalate dehydrogenase (350 aa).

76–87 contributes to the NAD(+) binding site; the sequence is GPKWDNAPKRPE. Positions 94, 104, 132, and 217 each coordinate substrate. 3 residues coordinate Mg(2+): Asp217, Asp241, and Asp245. Residue 275-287 coordinates NAD(+); the sequence is GSAPDIANQNIAN.

It belongs to the isocitrate and isopropylmalate dehydrogenases family. LeuB type 1 subfamily. Homodimer. The cofactor is Mg(2+). It depends on Mn(2+) as a cofactor.

It is found in the cytoplasm. It carries out the reaction (2R,3S)-3-isopropylmalate + NAD(+) = 4-methyl-2-oxopentanoate + CO2 + NADH. It participates in amino-acid biosynthesis; L-leucine biosynthesis; L-leucine from 3-methyl-2-oxobutanoate: step 3/4. Functionally, catalyzes the oxidation of 3-carboxy-2-hydroxy-4-methylpentanoate (3-isopropylmalate) to 3-carboxy-4-methyl-2-oxopentanoate. The product decarboxylates to 4-methyl-2 oxopentanoate. In Listeria monocytogenes serotype 4b (strain F2365), this protein is 3-isopropylmalate dehydrogenase.